The chain runs to 394 residues: Chalcone synthase (394 aa).

Residue Cys168 is part of the active site.

It belongs to the thiolase-like superfamily. Chalcone/stilbene synthases family.

The enzyme catalyses (E)-4-coumaroyl-CoA + 3 malonyl-CoA + 3 H(+) = 2',4,4',6'-tetrahydroxychalcone + 3 CO2 + 4 CoA. It functions in the pathway secondary metabolite biosynthesis; flavonoid biosynthesis. In terms of biological role, the primary product of this enzyme is 4,2',4',6'-tetrahydroxychalcone (also termed naringenin-chalcone or chalcone) which can under specific conditions spontaneously isomerize into naringenin. In Raphanus sativus (Radish), this protein is Chalcone synthase (CHS).